The chain runs to 413 residues: Serine hydroxymethyltransferase (413 aa).

(6S)-5,6,7,8-tetrahydrofolate contacts are provided by residues L117 and 121-123 (GHL). K226 is subject to N6-(pyridoxal phosphate)lysine. (6S)-5,6,7,8-tetrahydrofolate contacts are provided by residues E239 and 349 to 351 (SPF).

Belongs to the SHMT family. In terms of assembly, homodimer. It depends on pyridoxal 5'-phosphate as a cofactor.

It localises to the cytoplasm. It catalyses the reaction (6R)-5,10-methylene-5,6,7,8-tetrahydrofolate + glycine + H2O = (6S)-5,6,7,8-tetrahydrofolate + L-serine. It functions in the pathway one-carbon metabolism; tetrahydrofolate interconversion. Its pathway is amino-acid biosynthesis; glycine biosynthesis; glycine from L-serine: step 1/1. In terms of biological role, catalyzes the reversible interconversion of serine and glycine with tetrahydrofolate (THF) serving as the one-carbon carrier. This reaction serves as the major source of one-carbon groups required for the biosynthesis of purines, thymidylate, methionine, and other important biomolecules. Also exhibits THF-independent aldolase activity toward beta-hydroxyamino acids, producing glycine and aldehydes, via a retro-aldol mechanism. This Bacillus cytotoxicus (strain DSM 22905 / CIP 110041 / 391-98 / NVH 391-98) protein is Serine hydroxymethyltransferase.